Here is a 530-residue protein sequence, read N- to C-terminus: Putative sulfate transporter YvdB (530 aa).

A run of 10 helical transmembrane segments spans residues 19 to 39 (LIAG…FAIA), 41 to 61 (GVEP…ISLF), 68 to 88 (IGGP…QYGL), 91 to 111 (LLIA…FKLG), 121 to 141 (VIVG…IANF), 164 to 184 (LGTF…ILLV), 192 to 212 (VPGA…FFPD), 241 to 261 (MVML…ESIL), 313 to 333 (AVSP…LLVF), and 384 to 404 (VLFD…VFFI). Residues 420–530 (PVLAKREDPS…FFDHHDEITG (111 aa)) enclose the STAS domain.

Belongs to the SLC26A/SulP transporter (TC 2.A.53) family.

Its subcellular location is the cell membrane. The chain is Putative sulfate transporter YvdB (yvdB) from Bacillus subtilis (strain 168).